A 338-amino-acid polypeptide reads, in one-letter code: Ketol-acid reductoisomerase (NADP(+)) (338 aa).

The region spanning 1–181 (MKVFYDKDAD…GGGRAGIIET (181 aa)) is the KARI N-terminal Rossmann domain. NADP(+) is bound by residues 24-27 (YGSQ), R47, and S52. The active site involves H107. NADP(+) is bound at residue G133. A KARI C-terminal knotted domain is found at 182 to 327 (NFREETETDL…EKLRAMMPWI (146 aa)). D190, E194, E226, and E230 together coordinate Mg(2+). Residue S251 coordinates substrate.

This sequence belongs to the ketol-acid reductoisomerase family. Requires Mg(2+) as cofactor.

The catalysed reaction is (2R)-2,3-dihydroxy-3-methylbutanoate + NADP(+) = (2S)-2-acetolactate + NADPH + H(+). It carries out the reaction (2R,3R)-2,3-dihydroxy-3-methylpentanoate + NADP(+) = (S)-2-ethyl-2-hydroxy-3-oxobutanoate + NADPH + H(+). It participates in amino-acid biosynthesis; L-isoleucine biosynthesis; L-isoleucine from 2-oxobutanoate: step 2/4. Its pathway is amino-acid biosynthesis; L-valine biosynthesis; L-valine from pyruvate: step 2/4. In terms of biological role, involved in the biosynthesis of branched-chain amino acids (BCAA). Catalyzes an alkyl-migration followed by a ketol-acid reduction of (S)-2-acetolactate (S2AL) to yield (R)-2,3-dihydroxy-isovalerate. In the isomerase reaction, S2AL is rearranged via a Mg-dependent methyl migration to produce 3-hydroxy-3-methyl-2-ketobutyrate (HMKB). In the reductase reaction, this 2-ketoacid undergoes a metal-dependent reduction by NADPH to yield (R)-2,3-dihydroxy-isovalerate. The polypeptide is Ketol-acid reductoisomerase (NADP(+)) (Cupriavidus pinatubonensis (strain JMP 134 / LMG 1197) (Cupriavidus necator (strain JMP 134))).